Reading from the N-terminus, the 209-residue chain is Large ribosomal subunit protein uL3 (209 aa).

The tract at residues 127–166 (NFGGGSRTHGQSDRLRAPGSVGGSSDPSRTFKGTRMAGRM) is disordered.

It belongs to the universal ribosomal protein uL3 family. As to quaternary structure, part of the 50S ribosomal subunit. Forms a cluster with proteins L14 and L19.

One of the primary rRNA binding proteins, it binds directly near the 3'-end of the 23S rRNA, where it nucleates assembly of the 50S subunit. The protein is Large ribosomal subunit protein uL3 of Chlorobaculum tepidum (strain ATCC 49652 / DSM 12025 / NBRC 103806 / TLS) (Chlorobium tepidum).